The following is a 268-amino-acid chain: MEMO1 family protein Ta0237 (268 aa).

This sequence belongs to the MEMO1 family.

This chain is MEMO1 family protein Ta0237, found in Thermoplasma acidophilum (strain ATCC 25905 / DSM 1728 / JCM 9062 / NBRC 15155 / AMRC-C165).